A 9702-amino-acid chain; its full sequence is MSAESWKLQPRIEGLRGQDPVLASLIALEAWVLQAVEQFQFSTGVLKIGDAGDAPGGQWQLDGGDPRVLIAQLRGGQARQTVEDHHENSRDCAAHLRLSLLDSSEMLLILRLRFQGRAPASKSWCQEGQEGQEERCAGQVVEMECFFGAKDGGLELHRIPSPPAGAVEAVETFVRQLQERIIHQSSTTTNNNNNNALADIPRETTTTTTTTTTTTTIAASQSDLQQIWAWNATISPVAQRCVHHIIAEQAQLRPHAPAVAAWDGELNYQQLDQLSTRLALYLVQLGAGPQHMIPLCFEKSKWMIVAILAVMKSGAVIVALDPAQPEDRLQTIVNQLQQPRWIIASPAQTKVTTALGINNVIFLNHSLLQKLPDFPNRDLPSVDPSSNLYVVFTSGSTGTPKGVMINHTNFSSAIAYQHDALAMDHSSRVLDFASYAFDLAWGNIIHTLAAGGCLCIPCEDERRGNITEAICRLRVNHLQLTPSVARLIDPRDIPGLRTILLIGEPMSQADVAQWTPYAKMINSYGPAECTVAVTFQTIPHDKPWDSSMGKGVACNTWIVDETNGDTLVPLGHTGELWLEGPLVGQGYLGDPKKTAASFVDDPAWLTRGIPGVAGRPGRLYRTGDLVRYNQDGSLVYVARKDTQVKIRGQRVELGDVEYYLKLALPDKVLSVAAEAVIPWGSSTTLLVAYLALGDAATGAVESTRTSLATCLDGVEEYLAKQLPHYMVPSMYLAIPQIPMTTTGKTDRLRLREIGSSLTLDQLAAMQPSRATEKRAPQTEMEYRLQQLWAATLGIGPSSIGTEDSFLRIGGESMAAIRLVQLARKEGIVLTVADIFNQPRLCEMARAAQEKQTSVVPIVPPFSLLRGGAGEPDTRALAAAAACGVAAQSIADILPCTPLQEGLLALTAKQDGDYVHQLVSKLPATVDLVRLQAALTEVIQEAPILRTRIVDLPNAGLMQVVLTERFEWTTGSELDRFLESEKARPMGLGTPLSRFGLVSDHREGNLHFVWTIHHALYDGWSLPLLLERIEAVYAGDCSDSLPSFAGFVRYLADCPVADAHAYWQSQLNGAQAAVFPALPSPEYQPQCRDLLQCSIANVTWPGNDITASTAVRTAWAILTARYTLSADVLFGATVSGRQAPVPYIERMAGPTIATVPIRVNVQADSTVASLMQSIQSQAVAMIPYEQTGLKQIRQINSDTEQATQLQSLLVVQPPSSRSSRPPDECLLRVDLDAVDEFNTINTYALMLECRLGSNEMGLRIRYDRELIGTEQVERIAKQFEAVLRHVCSQETAQELVCTVTAASEDDLAQIWAWNATVPQNIPGCVHDLIAQRTQQQPDAPAICAWDGQLSYRELDVLSTRLAFSLVQRGAGRNTVIPLCFEKTVWTPVAMLAAIKAGSTVVAMDPGQPEDRLESIVKQTQPPLILASETYMPLASRLTEVAICVNTTALQVLAETCLEPPKLPIVHPTDGLYIAFTSGSTGNPKGATMTHQNTRSAIYHGLQALGFTSTTRVLGFSSYAFDAVWLEFLYAMASGGCLCIPSDLQRNSGDLAGCIAQLQVNHALLTPSTARLLDAAAVPTLRTLVLIGEAVTGEDLARWAGKVDLKNGYGPAECSALTTIYTFEGPNDQPSIIGPTVGLVPWVVEPSDGACLSPLGAVGELWVEGPLVGKGYLGDPDKTAASFVYDPSWLLHGAPGYPGRQARLYKTGDLVRYTSDGRLIYVGRKDTQVKIRGQRVELAEIEHYIKQATRASVVVDMASPQGSRGPVLVAYVALGQPAATLSPPETARAALQSCIQGVEDHLNKHLPRYMLPSFYIPVVEIPLTATGKTDRRRLRDTASAFALDQLAALQPSGESKRVLPQSPMEKSLQQLWAEVLNVDPSRIGMDESFFLLGGDSIAAMQVSAKSRVRGFPLTVQDIFKLKTIARLARREIQTDARLVDDQELLDTPFALSPIQQFFFDVERDRRGHFNQSFLVRITQSQQSELVLRAVQFIVGRHSMLRARFHQRPDDGVWMQQITPRADGSYVYRHHRLPSLEDAIPALNSSQQSLDVETGPIFAVDSVETAPGQQYLFLTAHHLVVDLVSWRIILEELEEYLKTDTVPSASSAPLSFQTWCRLQERYARDHLTPEVAFPFDLQPPPEAYWGLSPELNTHGDIHEAGFTLTKEATNLLLGPANRALQTQPVDLFLAALLYSFMNTFTDRDPPTVFTEGHGREPWSPEIDLSRTVGWFTTLVPIPVAAGSHTLGPSEFVRYIKDRRRQIPHNGWSYFTSRYLNAVGMASFGRHALPEIAFNYFGLYQQLERKEALFRASGCDLQDRVLDVAPHMTRFALIDVSAEVTQGCLQFRFLTSQHTQKQAALARWIAACERALEGTAVQLVNTPPSYTLSDFPLLPPTNTTSRLVETLSDHGLAYGELEDIYPCSPLQQGILLSQVKSQDMYWTQVRWRVRCNGGASPVDAARLERAWRQVVERHAVLRTRFIDSSYQMVLKEAAPSILTIQSADPVDAVVRHRATSGLSQPRPVHSLVLCPMANGDLVCSLEINHAIIDARSIQVLKHELCAAYGGALPAEPGPLYSDYIRHLQSLPTTDAMDFWRTQLANAQPCIFPTLNEPVVQARNAAAVASVPISPEIDQALRQFCRAHALTPANVFSLSWALILRCYTSSESICYGYVISGRDVPIPHVDRAVGPFINMVVSHVDVDNTRSLLGIMQEIQASYLSGVKYHHYPLAEILHDLNYNEGQPFFNTVLSVQSGSAAVDQPSPTATTIALENETWYDPNEYDIAASVLLRDNGKPEVSLNYAQNLLSERQAHAVATAFLDVVANIVRHPADRILGDLDTAILSPQDLATIWERNAEVPAALPSSVPALIACQVERQPDALAVCAWDGDFTYRQLDESSSRLAHHLLACGVRPHSILPLCFEKSRWVPVAMLGVLKAGCAAVTMDPEQPEERLRLVVQKTQAVILTSPACQDLARQLRPEVIILDGRSLQAMPPLLPDGLSLPTINPTDSLYLVFSSGTTGTPKGSVMSHQNACSAIYHQQACIGLPPSEARILDALSYAFDAPWFTFLHGLTSGGCLCIPSDTQRKEDLAGCIRGLGANYAILTPSVARLVDPPTVPSLEALGLGGEAIQTEDVTRWTSHVTLFGYYGPSECTICATIHRFKDRTDEPRMLGHSVGMRAWVVDPVHGRSLTPLGGTGELCLEGPLVGQGYLDEPEKTAASFVEDPGWLLRGAGPGYPGRRGRVYHTGDLVRCRTDGSMLYVGRKDTQVKIRGQRVELGEVEYHFRQTLPAGVDGPGTVVVEFVLFQGSTSPVLVAFIPLGHEATASAQSTRAALARCTDGAEERLIKRLPTYMIPRMYVPVAEIPLTTSGKTDRRSLQHVASSHTLEQIAALQPSRHMRRAPTTEMERHLQGLWATILDIDPATIAATDNFLRMGGDSIAAIRLVQLAGEQDILLTVAAVFKSPTLCEMSQVAKLGSVSSQNDPIPPFSLLNAEMDASQARVQVAALCELSPSSVEDVFPCTPLQEGLLSLTVKHQGDYVNRQVFALHSEVDPARFRNAWNKVSLSTSILRTRIVDLPGQGLVQVITSELPEWHHGRSLDDLVDEDRQRHIALGTPLARFGLVANADVNGDQQQYFLLTLHHALYDGWSLPLLLEEVAKAYYETPAANLVSFKSFVNHVTELGAEADSYWQSTLDGLTAVPFPSLPSPLYQPRAQDILEHDISGLQWLQNHITPATAIRAAWALLTAHYTQSTDVVLGSTVTGRQAPIHRIELVEGPTITTVPVRIPIDGKMSLAGLLDQVQEQSIDMIPYEQVGLQRIRRLSADSEQACQFQTLLVVQPAPEPTSSLGYARLFHEEEDPTASQTALNNFNSYALLLQCQLMPTGVAIQMSYDSHVMPQPQMHHLARQFENILRLLCDASHHQSPVSQLDVICEDDLRTIWASNSPVPARIEACMHDVITKQTQRRSAAQAVAAWDGSLTYSELDELSTQLAYDLVNLGIAPQTVIALCFEKSMWMPVAMLGVMKAGCASVTLDITQPEDRLRTIIQQVQPPVVLSSREAKILAQRLTDGPVHVVSQDSLQASSTPGKVERDQLPVVQPTDQLYICFTSGSTGVPKGAVMSHQNMTSAVHHQQAGLGFTESCRVFDFSSYAFDACWLNFLHTMAAGACLCIPSEEERKSDIVGCMRRMAVTYANLTPSTARLIDPTSIPDLQTLVLIGEPVAQQDIDQWKAHVQLKNGYGPAECSAISTTFDYGQSDCDPRTIGAGCGMITWVVEPTESRHLSPYGAVGELWVEGPLVGIGYLGRSDLSAASFMDSPPWLLRGGSHEFPGRSGRVYRTGDLVHYNLDGSGTLVCVGRKDAQVKIRGQRVELGEVEHFLNQALPLAAAEGVSIAVDVINLQGSANPLLVAYLAIGELALGPAETVRAKLAYYSQGARERLADQLPGYMVPSLFLPVVEIPMTTTGKRDRRRLRETWASSSLEELVELQPTRTNHQPPTTDLERQIQQLWAECLNVTPSKIGIHDSFFALGGDSISAMQLSAKGRSVNLPMTVSDIFKHKSIARLALSVSAAVDVTVAHAPEDHGVSFALSPIQQMFADTQQGVSNHFNQSFFVQVCQPVIFPQVQAAVDVLVAHHGMLRASLRCSGDNIWSQQILPPGTTGTYRVSQHDVPDFQAASAVINQSQLSLDIQSGPVMAVDLINTNKGQYLFLVAHHMVVDLVSWRIILADLEEHLTTASLSGFTSMSFQTWCQLQVDHAQSHVELEAVLPAGASPPPPPQLDYWGPVRNSNTFDNIVKGGIVLSKPVTEALLGPANIAFDTQLVELLHASLLHSFAKVFHDRTPPTIYSEGHGREPWSSTIDISRTVGWFTTMFPVVATAEKGDSIASIVRHVKDCRRQIPGNGRPYFATRFLTPAGKRAFQHHGPVEVIFNYLGLYQQLEREDSLFRQRGVPNGVDEMADISGRLFRFALVDISASVTDGALHVDFLYNRHMQHQDSIRAWIEECQRSLQAAAQALPLLQPSYTLCSFPLLRLADSALPILQHRLAELGLAYGQVEDIYPCSPLQNGILLSQMRDPDLYRTRVRWMAQPAHGSQSLDILKLKQAWQQLVDRHPILRTLFVEGISGRGLKDQLVVKNLQANVHIVQSSADNARSQSPSAPTARKSDSLLTLSMTETGVLCELSINHALIDAFSLGILKEELCAAYEGCLSSLAPLYSDYIQYTQSVSMESAEAYWQDHLRGVQPCLFPPLSNPNAESRRSHTSISVPFEQDLHLALRTFCIEHEVTTSNVFHVAWGLVLRAYTGLETVCFGYLKSGRDIPLQGADRTVGPFINMLTSRVDLANRGDSLLTLIQRNQEQYLASLEFQHIPLAKIFHLTDTPEKELFNTAISVQAVRTGPENTQSAMSLLDVGGDDPTEYDILINFGVGDDQTGFIFNFNDSVISPSHAKSALDLFLHAVSHTVQHKDQSAQDANIISHQDLETIWRWNAAVPKPHHQCVHELIMQQAESQPGAAAIHAWDGDLTYQELNDLSTQLACHIRYLGVEAGVHVPLLFEKSQWMSVASLAVMKAGGTMVGLDPSQPEERLQNIIQQVQPRLILASANAHATIAAVLAGACPVVRVDAASLAELNNTVSHFPLPRVDPATSLYLVFTSGSTGLPKGVAISHSNLSTAIAHQRSILRLSSSSRVLEFASYAFDVAWGTILHTLAAGGCVCVPEESERRGDLSAAIRRLEVNYMHLTPTVARLLSPTHLPRLQTLVLSGETVSQADVEQWISHVHLINAYGPAEATVWDTFADLTPGISIPSIGRGVGCSTWVVNPRRPDQLAPVGCTGELWLEGPLVGTGYHHDPERTAAAFVENPRWLVEGAGGSRYPGRQGRLYRTGDLVRYTSDGSIVYVGRKDNQVKIHGQRVELEEIEKHIQQALLDSSVSAAPAVPVVAAVIIPKKSTRPILVAYLALGEEATSSLGVLRRRLGTYAAVINQGLEKHLPTYMRPSIYIPVADIPMTTNGKADRRKLDAIGCGRTLAEWAGLQTDEDSQCTTASSPEELELQRLFSEVLNLDCGLVGMNDSFFSLGGDSITAMQLSAKSQSGRVYITVGDIFRHKTVAQLVSHAQGNTATKTSFEELVEVPDSLFELSPIQQLFFASQDTGKSLFNQSFLVSVSRPLNSNELDHAIGVLTARHSMLRARFVHGADGRWQQKIAADTAGCYVFRSHQITDFQDMEPVLHNSQLSLDIVRGPILAVDLVDSTQDGQQYLFMAAHHLIVDLVSWRIILGDLEEYLLSGTIAGFPPFSFQSWSQLQAQYARDHLPPQIALPFEVSPPRHDYWGLAPGDVANTLGDASRSSFTIDEHLTNVLLGPTANSAFDTQPVEILHAALLYAFAQTFKDRDAPSFFSEGHGREAWDSAIDLSRTVGWFTTIFPVAASVTQKNSLAEVVRCIKDTRRQTPANGWSYFTSRYLNPAGQRVFQLKGPVEIIFNYMGLYQQLERPDALFQQSDIAVTEPPAAAETLSRFALIDVAGSIVHGQLKLEFVYNKKMSGQDKIVEWIGRCKSSLEAAAAELPRLSPSYTICDFPLLSLSSTSLDRLTAEVLPALDIAYGQVEDIYPCAPIQQGILLSQAKNPELYWTRVRWTVQSTSTLPVDLSRLKHAWQLVVSRHAILRTIFIDGIGSGTVKNQVVLKDLRVDVGVLHPEQDSGHERRTILLSQTQLPQHALALAQTPSGGVLCDLEINHGMMDAYSLGLLRQEICAAYSGTLPTSPAPSYRSYIQHLQGVSVDEGHRFWKTYLDNIQPCHFPALGVVHGDDGPKTRSARSILLDTATHRTLRAFCRQHGVTSSNLFYLAWGLLLRTYTRSDRVCFGYLTSGRDVPVPGVDKIIGPLINMLVCALDFGEKASVRSVMRKVQEDYLSALSHQSTPLSKMLQLAGTSGQGLFNTGISVQGGAASSDLDQQDITITDQTGEDSPEYDIAVAISHDEDETEISFDYTDAALSSEAAESLGEFLVDIVADLVRDPDQSVQAITMISQQDLRSLWTWNRSVAETEHACVHDLIGTNVQKRPDAPAIDAWDGSLTYRALDSLSSRLACYLAHRGIQPNAAIPLCFEKSMWMPVAALAVIKAGGACVAMDMTQPEQRLRTILHQVQPDLLLASSENAQVARQLGDSQPVLEISQSFFTGLSRPISLCLPPVMPSGHLYTVFTSGSTGIPKGVIISHANFASAIVHQTGLLSLGPDSRVFDFVSYAFDVSWSNLLHTLAAGACLCIPSEAMRRDNPVEAMAAMQVTHAQLTPSMARTVDPDRCETLRTLILGGEAMSPHDIATWASRVDLRVAYGPAECTVAGVTATVPPQSAAHWELGKIGHGLGMNTWIVSMLDPTSLAPVGTVGELYLEGPLVGQGYLDQPDKTATGFVDDPAWLVRGGPSGSFPGRRGRLYRTGDLVRYCPDGSLLFVGRRDNQVKVRGQRVELQEVESHLQAHLVEAIGVVADVFKPQGSSNAMLVAYLAVGETIHSPTDRIHTALRPLIQGLNESLSAQIPQYMIPSMYIPVASIPIAATGKADRKCLRQLGSSLTLEQLARIQPPQDGEQQQGPQTEVERLLQGIWADVLNIRGQECIGVRESFFALGGDSISAMQLSTKMRSAGFSITVPDIFKLKTIANLARSARTVQGHVKTTTTWETRDDEPFDLAPVQQMFADVVRRKCNHFNQSYFLRIARPSIRAADVQRALEWVVRQHPMLRARFTLDPSGRWTQHIKPYTPGCYRYLEHVVESSFAEASPVLNASQTSLDLETGPLFSADLIQIRSTGDHYLYLVAHHMVVDLVSWRVIIAEIEDHLTAPNASSSSSLAPPMPFQAWCRLQAEHARDHLAPETALPVEIPPPPPGYWGAGDPESNTFGNAIHRSFKLTREVTDLLLGPANKAFDTQPVEILQGALLYSFVQVFQDRAPPTIFSEGHGREPWNTAIDLSRTVGWFTTLLPTVTSMGSDNTLAELVRHTKDCRRQVPGNGWPYFASRYLNPAGKQAFGTYGLPEITFNYLGANLGLDQGPGKDDSLLQPAALPPGCLSDVDESMPRFAWIEVSASVSSGCLEFGFLFGRCMKHRKSIEDWVAQCQRSLVTASELLMQRPPSYTRSDFPLLRLTEPALQTLVGSSLPQLGVSYGQVEDIYPCSPIQQGILLSQAKDPRVYWTRIRWRARSSDATMPLDPDRLARAWTRVVERHPVLRTRFINGLSPDSLKDQLVLKVSKPEIHVISGQEATDDPIAALDCYWERAQRKDHQLHALVMCPADASSGDVFCDLEMNHAITDATSTALLKRDIQAAYNGTLPETQPGPSYSDFIRHIHAIPAEVGMEYWRRYLEGAYACIFPTLAPAAATNSQDATVQNHPRGSLSHTLEQETHASLQAFLKTHELTAFNVFHLAWALILRCFVGSETLCFGYLLSGRDVPVDHADQIIGPFINMLVSRVGLGEGVTLMDAMKQSQADYLDSLTHQHCSLAQIINSLGNGGAEPLYNSVISVQGMDLKKENAGIDRGLCLEEQGGHDPTEYGIMINVGLGEQETAITFSYHVSLLSEEQASGVVDSLLRAVREIIRTPFRKAHEVDLSTDHDQQAIWAWNACVPPTVDLPVHGLVANTVQKQPHSTAICAWDGELSYGQLDELSTTLAHHLLARGLSSDTVVPLCFEKSLWMPVAILAVMKAGGVSVSMDANQPEERLRTIIEQTQPVIILCSETTHEKACRLGTCQVIPVGQRLLAGLAVPGQDATTRTTTTTTTTTTTLPIVDPSHRLYITFTSGSTGTPKGAIVTHSNFSSALLQQQEALSFGPHVRVFDFVSYAWDVAWSNLLRTLVAGGCLCIPSEFQRREEIEKTMSQLRVNYTTLTPSVARLLNPAAVPHLDTLALIGEPLSQADIARWAPHTKEIINTYGPSECPGCVTVSQIPLDTLYEPTLGVGSACNTWIVDPNNADHLVPVGGIGELWLEGPLIGLGYLGLPQRTAESFVTDPRWLLSGCPGRPGRGGRLYRTGDLVRYAPDGALIYIGRKDSQVKIRGQRVELGEIEYHVREGIAHISPVTDDLTVVAGVITPRGGSSKTLVVYLELGPIATGPVDRIRDALAGYTRGLDDYLSDRLPQYMLPNAYIPVAEIPMTVSGKTDRGRLSRIGASYTLSELAAMQPSSHEQRQSPTAPMERRLQQLWATVLGLDDPNAIAADASFFRIGGDSIAAIRLSQRASEDGLALTAADIFRKPRLCDLALLVREGDATSYHEPRPFSLLSAGGSGGAESNRLPDDLAARIGPLLEWPQHHIADVYPTTDLQNHYVSAAVDAHRGEVEYIYMDLPRGVDLARVQRSCLELWRHLDILRTVFIVDPQTRQTLQVVLNNVEPEIEVRHTEGDLRAACEQAYGEDLHRPLYLGRSFTRFLITANRASGDARLTLRLSHAQYDGFSLPIIFSLFAAFHRDDTPPPAAPKFAGYLRHVQKQRPAAEPYWRRLLEGSCITQTRHLSGLDGACRPNQHHGQLVQSKSTVPAPPARPGSTPATVFTTLCARTLAQLTGVRDVVFGNIVSGRATLPTALQTVAGPCVNTIPVRLRVEPEQSLTQQLATVHAQHIHSLPFETSQFSEIAAHCTDWPGDARAPGLVVQFQNLDNLEHDPGTAMHDTTEGGGTLAAYERPAAERLVDSDFLFILAKPVRDAWELSVAASDKLHTQATLDAVLEALCWQVEMVARGD.

The segment at 248–647 (EQAQLRPHAP…ARKDTQVKIR (400 aa)) is adenylation 1. Positions 775 to 852 (APQTEMEYRL…MARAAQEKQT (78 aa)) constitute a Carrier 1 domain. At Ser812 the chain carries O-(pantetheine 4'-phosphoryl)serine. A condensation 1 region spans residues 891 to 1288 (DILPCTPLQE…EAVLRHVCSQ (398 aa)). An adenylation 2 region spans residues 1330–1730 (QRTQQQPDAP…GRKDTQVKIR (401 aa)). The Carrier 2 domain occupies 1857–1933 (LPQSPMEKSL…RLARREIQTD (77 aa)). Residue Ser1894 is modified to O-(pantetheine 4'-phosphoryl)serine. Residues 1946 to 2374 (PFALSPIQQF…ERALEGTAVQ (429 aa)) form an epimerization 1 region. Residues 2414 to 2842 (EDIYPCSPLQ…LDTAILSPQD (429 aa)) are condensation 2. Residues 2868–3267 (QVERQPDALA…GRKDTQVKIR (400 aa)) form an adenylation 3 region. Residues 3397-3473 (APTTEMERHL…EMSQVAKLGS (77 aa)) enclose the Carrier 3 domain. Position 3434 is an O-(pantetheine 4'-phosphoryl)serine (Ser3434). The interval 3512 to 3920 (EDVFPCTPLQ…LLCDASHHQS (409 aa)) is condensation 3. The interval 3957–4361 (KQTQRRSAAQ…GRKDAQVKIR (405 aa)) is adenylation 4. One can recognise a Carrier 4 domain in the interval 4491 to 4568 (PPTTDLERQI…LALSVSAAVD (78 aa)). Ser4528 carries the post-translational modification O-(pantetheine 4'-phosphoryl)serine. An epimerization 2 region spans residues 4583–5013 (ALSPIQQMFA…QAAAQALPLL (431 aa)). The segment at 5049 to 5474 (VEDIYPCSPL…ANIISHQDLE (426 aa)) is condensation 4. The interval 5496–5899 (MQQAESQPGA…GRKDNQVKIH (404 aa)) is adenylation 5. The Carrier 5 domain maps to 6033-6110 (TASSPEELEL…LVSHAQGNTA (78 aa)). The residue at position 6070 (Ser6070) is an O-(pantetheine 4'-phosphoryl)serine. An epimerization 3 region spans residues 6127–6551 (ELSPIQQLFF…CKSSLEAAAA (425 aa)). The tract at residues 6593–6935 (VEDIYPCAPI…TGISVQGGAA (343 aa)) is condensation 5. The segment at 7047–7447 (KRPDAPAIDA…GRRDNQVKVR (401 aa)) is adenylation 6. One can recognise a Carrier 6 domain in the interval 7575–7655 (GPQTEVERLL…RSARTVQGHV (81 aa)). An O-(pantetheine 4'-phosphoryl)serine modification is found at Ser7613. Residues 7670–8106 (DLAPVQQMFA…LVTASELLMQ (437 aa)) form an epimerization 4 region. The tract at residues 8144–8588 (VEDIYPCSPI…EVDLSTDHDQ (445 aa)) is condensation 6. The adenylation 7 stretch occupies residues 8612 to 9025 (NTVQKQPHST…GRKDSQVKIR (414 aa)). Residues 9158 to 9236 (SPTAPMERRL…LALLVREGDA (79 aa)) enclose the Carrier 7 domain. The residue at position 9196 (Ser9196) is an O-(pantetheine 4'-phosphoryl)serine. Residues 9282-9629 (DVYPTTDLQN…DNLEHDPGTA (348 aa)) form a condensation 7 region.

This sequence belongs to the NRP synthetase family.

The protein operates within secondary metabolite biosynthesis. Functionally, nonribosomal peptide synthetase; part of the gene cluster that mediates the biosynthesis of the unguisins, gamma-aminobutyric acid (GABA)-containing fungal cyclic heptapeptides with the amino acid sequence cyclo-(D-Ala1-D-Val2-L-Phe3-D-Val4-D-Ala5-D-Trp6-GABA7) for unguisin A and cyclo-(D-Ala1-D-Val2-L-Leu3-D-Val4-D-Ala5-D-Trp6-GABA7) for unguisin B. UngA is the main enzyme within the cluster which condenses the 7 residues using its respective 7 modules. The terminal condensation domain (Ct) is involved in cyclization with D-alanine and thereby releasing of unguisins A and B. The alanine racemase ungC provides D-alanine, which is then accepted by the first adenylation domain of ungA. Finally, the hydrolase ungD catalyzes the hydrolysis between the D-tryptophan and GABA residues of unguisins A and B to produce the corresponding linear peptides. In Aspergillus violaceofuscus (strain CBS 115571), this protein is Nonribosomal peptide synthetase ungA.